The primary structure comprises 412 residues: uncharacterized protein (412 aa).

One can recognise a Radical SAM core domain in the interval 50 to 264; the sequence is EVDIRTAYIN…KSGRRIVIGD (215 aa). Residues Cys-64, Cys-68, and Cys-71 each coordinate [4Fe-4S] cluster.

Belongs to the radical SAM superfamily. Anaerobic sulfatase-maturating enzyme family. Requires [4Fe-4S] cluster as cofactor.

This is an uncharacterized protein from Archaeoglobus fulgidus (strain ATCC 49558 / DSM 4304 / JCM 9628 / NBRC 100126 / VC-16).